A 930-amino-acid chain; its full sequence is Isoleucine--tRNA ligase (930 aa).

The short motif at 57–67 is the 'HIGH' region element; the sequence is PYANGNIHVGH. Glu554 is an L-isoleucyl-5'-AMP binding site. The short motif at 595-599 is the 'KMSKS' region element; that stretch reads KMSKS. An ATP-binding site is contributed by Lys598. 4 residues coordinate Zn(2+): Cys888, Cys891, Cys908, and Cys911.

The protein belongs to the class-I aminoacyl-tRNA synthetase family. IleS type 1 subfamily. Monomer. It depends on Zn(2+) as a cofactor.

Its subcellular location is the cytoplasm. The catalysed reaction is tRNA(Ile) + L-isoleucine + ATP = L-isoleucyl-tRNA(Ile) + AMP + diphosphate. Catalyzes the attachment of isoleucine to tRNA(Ile). As IleRS can inadvertently accommodate and process structurally similar amino acids such as valine, to avoid such errors it has two additional distinct tRNA(Ile)-dependent editing activities. One activity is designated as 'pretransfer' editing and involves the hydrolysis of activated Val-AMP. The other activity is designated 'posttransfer' editing and involves deacylation of mischarged Val-tRNA(Ile). In Streptococcus gordonii (strain Challis / ATCC 35105 / BCRC 15272 / CH1 / DL1 / V288), this protein is Isoleucine--tRNA ligase.